The following is a 408-amino-acid chain: Gustatory receptor 10a (408 aa).

Residues 1–20 (MTSPDERKSFWERHEFKFYR) are Cytoplasmic-facing. A helical membrane pass occupies residues 21 to 38 (YGHVYALIYGQVVIDYVP). At 39–48 (QRALKRGVKV) the chain is on the extracellular side. Residues 49-69 (LLIAYGHLFSMLLIVVLPGYF) form a helical membrane-spanning segment. Over 70 to 86 (CYHFRTLTDTLDRRLQL) the chain is Cytoplasmic. Residues 87 to 107 (LFYVSFTNTAIKYATVIVTYV) form a helical membrane-spanning segment. Topologically, residues 108–144 (ANTVHFEAINQRCTMQRTHLEFEFKNAPQEPKRPFEF) are extracellular. The helical transmembrane segment at 145–165 (FMYFKFCLINLMMMIQVCGIF) threads the bilayer. Topologically, residues 166–270 (AQYGEVGKGS…RESFRMHQFQ (105 aa)) are cytoplasmic. Residues 271–291 (LIGLMLSTLINNLTNFYTLFH) form a helical membrane-spanning segment. The Extracellular segment spans residues 292–304 (MLAKQSLEEVSYP). The helical transmembrane segment at 305–325 (VVVGSVYATGFYIDTYIVALI) threads the bilayer. At 326–381 (NEHIKLELEAVALTMRRFAEPREMDERLTREIEHLSLELLNYQPPMLCGLLHLDRR) the chain is on the cytoplasmic side. The helical transmembrane segment at 382 to 402 (LVYLIAVTAFSYFITLVQFDL) threads the bilayer. Topologically, residues 403 to 408 (YLRKKS) are extracellular.

Belongs to the insect chemoreceptor superfamily. Gustatory receptor (GR) family. Gr10a subfamily. In terms of tissue distribution, expressed in the medial aspect of the third antennal segment, and in neurons of the terminal external chemosensory organ of larvae.

Its subcellular location is the cell membrane. In terms of biological role, probable gustatory receptor which mediates acceptance or avoidance behavior, depending on its substrates. This Drosophila melanogaster (Fruit fly) protein is Gustatory receptor 10a (Gr10a).